The sequence spans 351 residues: Neutral protease 2 homolog MGG_10927 (351 aa).

The first 16 residues, 1-16, serve as a signal peptide directing secretion; it reads MKFSIGVSLLATLAGA. Positions 17-177 are excised as a propeptide; the sequence is VNVDMAKRDT…AAFLAKRTIV (161 aa). 2 disulfides stabilise this stretch: Cys-181/Cys-253 and Cys-260/Cys-278. Residue His-303 coordinates Zn(2+). Glu-304 is an active-site residue. His-307 lines the Zn(2+) pocket.

It belongs to the peptidase M35 family. It depends on Zn(2+) as a cofactor.

Its subcellular location is the secreted. It carries out the reaction Preferential cleavage of bonds with hydrophobic residues in P1'. Also 3-Asn-|-Gln-4 and 8-Gly-|-Ser-9 bonds in insulin B chain.. In terms of biological role, secreted metalloproteinase that allows assimilation of proteinaceous substrates. Shows high activities on basic nuclear substrates such as histone and protamine. This is Neutral protease 2 homolog MGG_10927 from Colletotrichum graminicola (strain M1.001 / M2 / FGSC 10212) (Maize anthracnose fungus).